The sequence spans 560 residues: Membrane protein insertase YidC (560 aa).

6 consecutive transmembrane segments (helical) span residues 5–25 (IINL…WQYF), 334–354 (AIDF…MNFF), 357–377 (YVGN…LLMF), 431–451 (LPIL…YVTI), 476–496 (LFGL…WPIL), and 522–542 (FMPL…LIYW).

The protein belongs to the OXA1/ALB3/YidC family. Type 1 subfamily. In terms of assembly, interacts with the Sec translocase complex via SecD. Specifically interacts with transmembrane segments of nascent integral membrane proteins during membrane integration.

It is found in the cell inner membrane. Required for the insertion and/or proper folding and/or complex formation of integral membrane proteins into the membrane. Involved in integration of membrane proteins that insert both dependently and independently of the Sec translocase complex, as well as at least some lipoproteins. Aids folding of multispanning membrane proteins. In Rickettsia massiliae (strain Mtu5), this protein is Membrane protein insertase YidC.